A 785-amino-acid polypeptide reads, in one-letter code: Endonuclease MutS2 (785 aa).

334–341 (GPNTGGKT) contributes to the ATP binding site. One can recognise a Smr domain in the interval 710-785 (LDLRGQRYDE…GNGATIVKLK (76 aa)).

This sequence belongs to the DNA mismatch repair MutS family. MutS2 subfamily. Homodimer. Binds to stalled ribosomes, contacting rRNA.

Its function is as follows. Endonuclease that is involved in the suppression of homologous recombination and thus may have a key role in the control of bacterial genetic diversity. Functionally, acts as a ribosome collision sensor, splitting the ribosome into its 2 subunits. Detects stalled/collided 70S ribosomes which it binds and splits by an ATP-hydrolysis driven conformational change. Acts upstream of the ribosome quality control system (RQC), a ribosome-associated complex that mediates the extraction of incompletely synthesized nascent chains from stalled ribosomes and their subsequent degradation. Probably generates substrates for RQC. The chain is Endonuclease MutS2 from Lactobacillus helveticus (strain DPC 4571).